A 187-amino-acid chain; its full sequence is Homeobox protein engrailed-like ceh-16 (187 aa).

Disordered regions lie at residues 14–43 (PYPC…NGTP), 60–100 (SDRP…DQLD), and 144–167 (KSTS…HPSI). Over residues 20-39 (PTISTPATSPSSISPTFASP) the composition is skewed to low complexity. A DNA-binding region (homeobox) is located at residues 87–146 (EKRPRTAFTGDQLDRLKTEFRESRYLTEKRRQELAHELGLNESQIKIWFQNKRAKLKKST). Residues 145–163 (STSSVPRDRCSSVTPNPHN) are compositionally biased toward polar residues.

This sequence belongs to the engrailed homeobox family. In terms of tissue distribution, expressed in seam cells.

It localises to the nucleus. The protein resides in the cytoplasm. Functionally, transcriptional regulator which binds to DNA to regulate gene expression and promote seam cell development and differentiation during embryogenesis. Plays a role in maintaining the boundaries between the lateral rows of seam cells and the ventral and dorsal row of epidermal cells during embryonic development. Negatively regulates the expression of the fusion effector protein eff-1 to prevent seam cell fusion with the dorsal and ventral epidermal cells during embryonic elongation. Positively regulates seam cell self-renewal and expansion during the L2 larval stage to promote seam cell development. This role does not seem to be via regulation of eff-1 expression. Specifically, it is required for the asymmetric division of the V5.p seam cell during the L2 larval stage, and in turn the asymmetric nuclear distribution of pop-1 in V5.p daughter cells. This Caenorhabditis elegans protein is Homeobox protein engrailed-like ceh-16.